Consider the following 272-residue polypeptide: Shikimate dehydrogenase (NADP(+)) (272 aa).

Residues 14-16 and T61 contribute to the shikimate site; that span reads SLS. K65 serves as the catalytic Proton acceptor. D102 provides a ligand contact to shikimate. NADP(+) is bound by residues 127-131, 151-156, and L215; these read GAGGA and NRTPSK. Residue Y217 participates in shikimate binding. G239 is a binding site for NADP(+).

Belongs to the shikimate dehydrogenase family. As to quaternary structure, homodimer.

It carries out the reaction shikimate + NADP(+) = 3-dehydroshikimate + NADPH + H(+). The protein operates within metabolic intermediate biosynthesis; chorismate biosynthesis; chorismate from D-erythrose 4-phosphate and phosphoenolpyruvate: step 4/7. In terms of biological role, involved in the biosynthesis of the chorismate, which leads to the biosynthesis of aromatic amino acids. Catalyzes the reversible NADPH linked reduction of 3-dehydroshikimate (DHSA) to yield shikimate (SA). The polypeptide is Shikimate dehydrogenase (NADP(+)) (Coxiella burnetii (strain Dugway 5J108-111)).